Here is a 316-residue protein sequence, read N- to C-terminus: Homoserine O-succinyltransferase (316 aa).

The active-site Acyl-thioester intermediate is Cys142. Positions 163 and 192 each coordinate substrate. Catalysis depends on His235, which acts as the Proton acceptor. The active site involves Glu237. Arg249 lines the substrate pocket.

The protein belongs to the MetA family.

It is found in the cytoplasm. It catalyses the reaction L-homoserine + succinyl-CoA = O-succinyl-L-homoserine + CoA. It functions in the pathway amino-acid biosynthesis; L-methionine biosynthesis via de novo pathway; O-succinyl-L-homoserine from L-homoserine: step 1/1. Transfers a succinyl group from succinyl-CoA to L-homoserine, forming succinyl-L-homoserine. This chain is Homoserine O-succinyltransferase, found in Shewanella amazonensis (strain ATCC BAA-1098 / SB2B).